A 439-amino-acid chain; its full sequence is Xylose isomerase (439 aa).

Residues His-103 and Asp-106 contribute to the active site. The Mg(2+) site is built by Glu-234, Glu-270, His-273, Asp-298, Asp-309, Asp-311, and Asp-341.

The protein belongs to the xylose isomerase family. Homotetramer. Requires Mg(2+) as cofactor.

Its subcellular location is the cytoplasm. The catalysed reaction is alpha-D-xylose = alpha-D-xylulofuranose. The polypeptide is Xylose isomerase (Bacteroides fragilis (strain YCH46)).